The following is a 440-amino-acid chain: Chromosome partition protein MukF (440 aa).

The leucine-zipper stretch occupies residues L208–I236.

It belongs to the MukF family. Interacts, and probably forms a ternary complex, with MukE and MukB via its C-terminal region. The complex formation is stimulated by calcium or magnesium. It is required for an interaction between MukE and MukB.

The protein resides in the cytoplasm. It is found in the nucleoid. Its function is as follows. Involved in chromosome condensation, segregation and cell cycle progression. May participate in facilitating chromosome segregation by condensation DNA from both sides of a centrally located replisome during cell division. Not required for mini-F plasmid partitioning. Probably acts via its interaction with MukB and MukE. Overexpression results in anucleate cells. It has a calcium binding activity. The protein is Chromosome partition protein MukF of Escherichia coli (strain ATCC 8739 / DSM 1576 / NBRC 3972 / NCIMB 8545 / WDCM 00012 / Crooks).